The following is a 553-amino-acid chain: Solute carrier family 22 member 12 (553 aa).

A helical membrane pass occupies residues 10 to 30; that stretch reads VGGLGRFQLFQTVALVTPILW. A glycan (N-linked (GlcNAc...) asparagine) is linked at N56. A run of 11 helical transmembrane segments spans residues 146-166, 182-202, 204-224, 232-252, 260-280, 351-371, 378-398, 412-432, 435-455, 466-486, and 495-515; these read PMAQSIFLAGILVGAAVCGHA, LVSVSGTAAAFMPTFPLYCLF, FLLASAVAGVMMNTASLLMEW, LVMTLNALGFSFGQVLTGSVA, MLQLAVSAPFFLFFVYSWWLP, IISMLCWFAFGFTFYGLALDL, IFLLQALIGIVDFPVKTGSLL, FLVLPGLCILSNILVPHGMGV, SALAVLGLGCLGGAFTCITIF, MTAVGLCQVAARGGAMLGPLV, and WMPLLVYGVVPVLSGLAALLL. The residue at position 534 (S534) is a Phosphoserine. T542 is subject to Phosphothreonine.

It belongs to the major facilitator (TC 2.A.1) superfamily. Organic cation transporter (TC 2.A.1.19) family. As to quaternary structure, interacts with PDZK1. Post-translationally, N-glycosylated. As to expression, detected in kidney (at protein level). Detected in kidney cortex, in proximal tubules.

The protein resides in the apical cell membrane. It carries out the reaction urate(out) + (S)-lactate(in) = urate(in) + (S)-lactate(out). The catalysed reaction is nicotinate(in) + urate(out) = nicotinate(out) + urate(in). The enzyme catalyses urate(out) + n chloride(in) = urate(in) + n chloride(out). It catalyses the reaction orotate(out) + nicotinate(in) = orotate(in) + nicotinate(out). Its function is as follows. Electroneutral antiporter that translocates urate across the apical membrane of proximal tubular cells in exchange for monovalent organic or inorganic anions. Involved in renal reabsorption of urate and helps maintaining blood levels of uric acid. Mediates urate uptake by an exchange with organic anions such as (S)-lactate and nicotinate, and inorganic anion Cl(-). Other inorganic anions such as Br(-), I(-) and NO3(-) may also act as counteranions that exchange for urate. Also mediates orotate tubular uptake coupled with nicotinate efflux and to a lesser extent with lactate efflux, therefore displaying a potential role in orotate renal reabsorption. Orotate transport is Cl(-)-dependent. The chain is Solute carrier family 22 member 12 from Mus musculus (Mouse).